A 450-amino-acid chain; its full sequence is UDP-N-acetylmuramoylalanine--D-glutamate ligase (450 aa).

Residue 119–125 (GSNGKTT) coordinates ATP.

This sequence belongs to the MurCDEF family.

The protein localises to the cytoplasm. It carries out the reaction UDP-N-acetyl-alpha-D-muramoyl-L-alanine + D-glutamate + ATP = UDP-N-acetyl-alpha-D-muramoyl-L-alanyl-D-glutamate + ADP + phosphate + H(+). It functions in the pathway cell wall biogenesis; peptidoglycan biosynthesis. Functionally, cell wall formation. Catalyzes the addition of glutamate to the nucleotide precursor UDP-N-acetylmuramoyl-L-alanine (UMA). The polypeptide is UDP-N-acetylmuramoylalanine--D-glutamate ligase (Bacillus cereus (strain ATCC 14579 / DSM 31 / CCUG 7414 / JCM 2152 / NBRC 15305 / NCIMB 9373 / NCTC 2599 / NRRL B-3711)).